The chain runs to 197 residues: Segregation and condensation protein B (197 aa).

It belongs to the ScpB family. Homodimer. Homodimerization may be required to stabilize the binding of ScpA to the Smc head domains. Component of a cohesin-like complex composed of ScpA, ScpB and the Smc homodimer, in which ScpA and ScpB bind to the head domain of Smc. The presence of the three proteins is required for the association of the complex with DNA.

Its subcellular location is the cytoplasm. Participates in chromosomal partition during cell division. May act via the formation of a condensin-like complex containing Smc and ScpA that pull DNA away from mid-cell into both cell halves. The polypeptide is Segregation and condensation protein B (Bacillus licheniformis (strain ATCC 14580 / DSM 13 / JCM 2505 / CCUG 7422 / NBRC 12200 / NCIMB 9375 / NCTC 10341 / NRRL NRS-1264 / Gibson 46)).